Here is a 370-residue protein sequence, read N- to C-terminus: tRNA-specific 2-thiouridylase MnmA (370 aa).

Residues 24-31 (AMSGGVDS) and L50 contribute to the ATP site. C119 acts as the Nucleophile in catalysis. The cysteines at positions 119 and 215 are disulfide-linked. Residue G143 coordinates ATP. Positions 165 to 167 (KDQ) are interaction with tRNA. C215 functions as the Cysteine persulfide intermediate in the catalytic mechanism.

This sequence belongs to the MnmA/TRMU family.

The protein localises to the cytoplasm. It carries out the reaction S-sulfanyl-L-cysteinyl-[protein] + uridine(34) in tRNA + AH2 + ATP = 2-thiouridine(34) in tRNA + L-cysteinyl-[protein] + A + AMP + diphosphate + H(+). Functionally, catalyzes the 2-thiolation of uridine at the wobble position (U34) of tRNA, leading to the formation of s(2)U34. This chain is tRNA-specific 2-thiouridylase MnmA, found in Wolbachia sp. subsp. Drosophila simulans (strain wRi).